Reading from the N-terminus, the 281-residue chain is Bifunctional protein FolD (281 aa).

NADP(+) contacts are provided by residues 164–166 (GAS), Ile189, and Ile230.

It belongs to the tetrahydrofolate dehydrogenase/cyclohydrolase family. Homodimer.

It catalyses the reaction (6R)-5,10-methylene-5,6,7,8-tetrahydrofolate + NADP(+) = (6R)-5,10-methenyltetrahydrofolate + NADPH. The enzyme catalyses (6R)-5,10-methenyltetrahydrofolate + H2O = (6R)-10-formyltetrahydrofolate + H(+). The protein operates within one-carbon metabolism; tetrahydrofolate interconversion. Catalyzes the oxidation of 5,10-methylenetetrahydrofolate to 5,10-methenyltetrahydrofolate and then the hydrolysis of 5,10-methenyltetrahydrofolate to 10-formyltetrahydrofolate. The protein is Bifunctional protein FolD of Sulfurovum sp. (strain NBC37-1).